We begin with the raw amino-acid sequence, 242 residues long: Tropomyosin-1 (242 aa).

Disordered stretches follow at residues 1–31 and 65–96; these read MDAI…ELTA and TSLT…QTDY. Positions 1 to 242 form a coiled coil; the sequence is MDAIKKKMSA…DELLLELASM (242 aa). 2 stretches are compositionally biased toward basic and acidic residues: residues 13 to 23 and 70 to 96; these read TKLEEADKQAQ and KYNE…QTDY.

This sequence belongs to the tropomyosin family. In terms of assembly, homodimer. As to expression, expressed ubiquitously.

In Podocoryna carnea (Hydrozoan), this protein is Tropomyosin-1 (TPM1).